A 260-amino-acid polypeptide reads, in one-letter code: 3-methyl-2-oxobutanoate hydroxymethyltransferase (260 aa).

Mg(2+) is bound by residues Asp-44 and Asp-83. 3-methyl-2-oxobutanoate is bound by residues 44–45 (DS), Asp-83, and Lys-113. A Mg(2+)-binding site is contributed by Glu-115. The active-site Proton acceptor is the Glu-182.

This sequence belongs to the PanB family. As to quaternary structure, homodecamer; pentamer of dimers. The cofactor is Mg(2+).

It is found in the cytoplasm. It carries out the reaction 3-methyl-2-oxobutanoate + (6R)-5,10-methylene-5,6,7,8-tetrahydrofolate + H2O = 2-dehydropantoate + (6S)-5,6,7,8-tetrahydrofolate. It participates in cofactor biosynthesis; (R)-pantothenate biosynthesis; (R)-pantoate from 3-methyl-2-oxobutanoate: step 1/2. In terms of biological role, catalyzes the reversible reaction in which hydroxymethyl group from 5,10-methylenetetrahydrofolate is transferred onto alpha-ketoisovalerate to form ketopantoate. In Synechocystis sp. (strain ATCC 27184 / PCC 6803 / Kazusa), this protein is 3-methyl-2-oxobutanoate hydroxymethyltransferase.